We begin with the raw amino-acid sequence, 305 residues long: Cyclin-dependent kinase 3 (305 aa).

In terms of domain architecture, Protein kinase spans 4 to 286 (FQKVEKIGEG…AKTALAHPYF (283 aa)). Residues 10–18 (IGEGTYGVV) and lysine 33 contribute to the ATP site. Catalysis depends on aspartate 127, which acts as the Proton acceptor.

The protein belongs to the protein kinase superfamily. CMGC Ser/Thr protein kinase family. CDC2/CDKX subfamily. As to quaternary structure, interacts with CABLES1 and CABLES2. Interacts with ATF1. Binding to CCNC/cyclin-C promotes RB1 phosphorylation. As to expression, expressed in cancer cell lines and glioblastoma tissue.

It catalyses the reaction L-seryl-[protein] + ATP = O-phospho-L-seryl-[protein] + ADP + H(+). The enzyme catalyses L-threonyl-[protein] + ATP = O-phospho-L-threonyl-[protein] + ADP + H(+). Its function is as follows. Serine/threonine-protein kinase that plays a critical role in the control of the eukaryotic cell cycle; involved in G0-G1 and G1-S cell cycle transitions. Interacts with CCNC/cyclin-C during interphase. Phosphorylates histone H1, ATF1, RB1 and CABLES1. ATF1 phosphorylation triggers ATF1 transactivation and transcriptional activities, and promotes cell proliferation and transformation. CDK3/cyclin-C mediated RB1 phosphorylation is required for G0-G1 transition. Promotes G1-S transition probably by contributing to the activation of E2F1, E2F2 and E2F3 in a RB1-independent manner. This is Cyclin-dependent kinase 3 (CDK3) from Homo sapiens (Human).